A 222-amino-acid chain; its full sequence is Thiamine-phosphate synthase (222 aa).

4-amino-2-methyl-5-(diphosphooxymethyl)pyrimidine contacts are provided by residues 44 to 48 (QFREK) and asparagine 79. Mg(2+) is bound by residues aspartate 80 and aspartate 99. Residue serine 117 coordinates 4-amino-2-methyl-5-(diphosphooxymethyl)pyrimidine. 143–145 (TET) is a 2-[(2R,5Z)-2-carboxy-4-methylthiazol-5(2H)-ylidene]ethyl phosphate binding site. Residue lysine 146 participates in 4-amino-2-methyl-5-(diphosphooxymethyl)pyrimidine binding. Residues glycine 175 and 195-196 (IS) contribute to the 2-[(2R,5Z)-2-carboxy-4-methylthiazol-5(2H)-ylidene]ethyl phosphate site.

Belongs to the thiamine-phosphate synthase family. In terms of assembly, monomer. It depends on Mg(2+) as a cofactor.

It carries out the reaction 2-[(2R,5Z)-2-carboxy-4-methylthiazol-5(2H)-ylidene]ethyl phosphate + 4-amino-2-methyl-5-(diphosphooxymethyl)pyrimidine + 2 H(+) = thiamine phosphate + CO2 + diphosphate. The catalysed reaction is 2-(2-carboxy-4-methylthiazol-5-yl)ethyl phosphate + 4-amino-2-methyl-5-(diphosphooxymethyl)pyrimidine + 2 H(+) = thiamine phosphate + CO2 + diphosphate. The enzyme catalyses 4-methyl-5-(2-phosphooxyethyl)-thiazole + 4-amino-2-methyl-5-(diphosphooxymethyl)pyrimidine + H(+) = thiamine phosphate + diphosphate. It participates in cofactor biosynthesis; thiamine diphosphate biosynthesis; thiamine phosphate from 4-amino-2-methyl-5-diphosphomethylpyrimidine and 4-methyl-5-(2-phosphoethyl)-thiazole: step 1/1. Its function is as follows. Condenses 4-methyl-5-(beta-hydroxyethyl)thiazole monophosphate (THZ-P) and 2-methyl-4-amino-5-hydroxymethyl pyrimidine pyrophosphate (HMP-PP) to form thiamine monophosphate (TMP). Is also able to use the 2-methoxy analog MeO-HMP-PP, as substrate in vitro, but not the 2-trifluoromethyl analog CF(3)-HMP-PP. This Bacillus subtilis (strain 168) protein is Thiamine-phosphate synthase (thiE).